We begin with the raw amino-acid sequence, 261 residues long: Undecaprenyl-diphosphatase (261 aa).

A run of 8 helical transmembrane segments spans residues 1-21, 40-60, 79-99, 106-126, 140-160, 185-205, 210-230, and 239-259; these read MTVL…FLPI, GLTF…AYFW, GRLF…GVLF, IFRS…GLWW, VNLF…IPGV, FLMS…ELPL, LAFI…IKFL, and YLLF…VFWL.

It belongs to the UppP family.

It localises to the cell membrane. The enzyme catalyses di-trans,octa-cis-undecaprenyl diphosphate + H2O = di-trans,octa-cis-undecaprenyl phosphate + phosphate + H(+). In terms of biological role, catalyzes the dephosphorylation of undecaprenyl diphosphate (UPP). Confers resistance to bacitracin. This Moorella thermoacetica (strain ATCC 39073 / JCM 9320) protein is Undecaprenyl-diphosphatase.